The sequence spans 177 residues: Tubulin beta chain (177 aa).

Positions 156 to 177 (YQDATAEEEGEFDEEEGDEEAA) are disordered. Residues 160 to 177 (TAEEEGEFDEEEGDEEAA) show a composition bias toward acidic residues.

It belongs to the tubulin family. In terms of assembly, dimer of alpha and beta chains. A typical microtubule is a hollow water-filled tube with an outer diameter of 25 nm and an inner diameter of 15 nM. Alpha-beta heterodimers associate head-to-tail to form protofilaments running lengthwise along the microtubule wall with the beta-tubulin subunit facing the microtubule plus end conferring a structural polarity. Microtubules usually have 13 protofilaments but different protofilament numbers can be found in some organisms and specialized cells. Mg(2+) is required as a cofactor.

Its subcellular location is the cytoplasm. The protein resides in the cytoskeleton. Its function is as follows. Tubulin is the major constituent of microtubules, a cylinder consisting of laterally associated linear protofilaments composed of alpha- and beta-tubulin heterodimers. Microtubules grow by the addition of GTP-tubulin dimers to the microtubule end, where a stabilizing cap forms. Below the cap, tubulin dimers are in GDP-bound state, owing to GTPase activity of alpha-tubulin. The polypeptide is Tubulin beta chain (Lytechinus pictus (Painted sea urchin)).